The sequence spans 396 residues: Subtilisin-like protease 5 (396 aa).

An N-terminal signal peptide occupies residues 1-20 (MTGFFTILSFSLAALSVTNA). A propeptide spanning residues 21–116 (AQILSVPKGA…VEPDAIISQH (96 aa)) is cleaved from the precursor. In terms of domain architecture, Inhibitor I9 spans 37-113 (YIVVMKDDTS…VAFVEPDAII (77 aa)). N-linked (GlcNAc...) asparagine glycosylation is present at Asn63. The Peptidase S8 domain maps to 125–396 (PWGLSRLSNR…SRLLYNGSGR (272 aa)). Active-site charge relay system residues include Asp156 and His187. Residues Asn230 and Asn248 are each glycosylated (N-linked (GlcNAc...) asparagine). The active-site Charge relay system is the Ser342. A compositionally biased stretch (polar residues) spans 376-389 (PTIRNPGPDTTSRL). The interval 376-396 (PTIRNPGPDTTSRLLYNGSGR) is disordered. N-linked (GlcNAc...) asparagine glycosylation occurs at Asn392.

The protein belongs to the peptidase S8 family.

Its subcellular location is the secreted. Functionally, secreted subtilisin-like serine protease with keratinolytic activity that contributes to pathogenicity. The chain is Subtilisin-like protease 5 (SUB5) from Trichophyton verrucosum (Cattle ringworm fungus).